Consider the following 152-residue polypeptide: Transcriptional regulator MraZ (152 aa).

SpoVT-AbrB domains are found at residues A5–E52 and A81–A124.

Belongs to the MraZ family. In terms of assembly, forms oligomers.

The protein resides in the cytoplasm. The protein localises to the nucleoid. This Shewanella sediminis (strain HAW-EB3) protein is Transcriptional regulator MraZ.